A 901-amino-acid chain; its full sequence is Clathrin coat assembly protein AP180 (901 aa).

Residues 14–145 enclose the ENTH domain; the sequence is QYSVTGSAVA…FSYRQMAFDF (132 aa). 4 disordered regions span residues 285–326, 397–424, 497–522, and 573–606; these read LEGK…DTSP, PISD…STTT, PETS…PSPA, and AAAP…PESS. Phosphoserine occurs at positions 296, 300, and 306. Residues 302–324 are compositionally biased toward polar residues; the sequence is LSKSSPATTVTSPNSTPAKTIDT. Thr310 is a glycosylation site (O-linked (GlcNAc) threonine). At Ser313 the chain carries Phosphoserine. Residue Thr317 is modified to Phosphothreonine. Composition is skewed to low complexity over residues 410-424 and 500-511; these read TTTT…STTT and SAPVVTPTASTA. The span at 512–522 shows a compositional bias: pro residues; sequence PPVPATAPSPA. Residues Ser594, Ser600, Ser621, Ser627, and Ser761 each carry the phosphoserine modification. Disordered stretches follow at residues 803 to 845 and 857 to 901; these read SAGV…GMTM and MMRP…KDFL. Residues 835-845 are compositionally biased toward low complexity; that stretch reads GMPPSGTGMTM. Arg859 bears the Asymmetric dimethylarginine; alternate mark. Arg859 bears the Omega-N-methylarginine; alternate mark. Residues 870-882 are compositionally biased toward polar residues; it reads TQLSPSPTPATQS. A compositionally biased stretch (basic and acidic residues) spans 887–901; the sequence is PAKDPLADLNIKDFL.

This sequence belongs to the PICALM/SNAP91 family. Binds AP2A2. Interacts with AP2B1; clathrin competes with SNAP91. In terms of processing, thr-310 can be modified by the addition of N-acetylglucosamine which can be further phosphorylated. There is no evidence for direct Thr-310 phosphorylation. As to expression, brain. Associated with the synapses.

The protein localises to the cell membrane. Its subcellular location is the membrane. The protein resides in the coated pit. Adaptins are components of the adaptor complexes which link clathrin to receptors in coated vesicles. Clathrin-associated protein complexes are believed to interact with the cytoplasmic tails of membrane proteins, leading to their selection and concentration. Binding of AP180 to clathrin triskelia induces their assembly into 60-70 nm coats. In Mus musculus (Mouse), this protein is Clathrin coat assembly protein AP180 (Snap91).